A 149-amino-acid chain; its full sequence is Urease accessory protein UreE (149 aa).

It belongs to the UreE family.

The protein resides in the cytoplasm. Its function is as follows. Involved in urease metallocenter assembly. Binds nickel. Probably functions as a nickel donor during metallocenter assembly. This is Urease accessory protein UreE from Ureaplasma parvum serovar 3 (strain ATCC 700970).